The sequence spans 376 residues: Protein-tyrosine sulfotransferase 2 (376 aa).

Residues 1-8 (MRLSVRKV) lie on the Cytoplasmic side of the membrane. Residues 9–25 (LLAAGCALALVLAVQLG) form a helical; Signal-anchor for type II membrane protein membrane-spanning segment. The Lumenal portion of the chain corresponds to 26-376 (QQVLECRAVL…NSTSPHLGSS (351 aa)). 77-81 (RSGTT) contributes to the 3'-phosphoadenylyl sulfate binding site. Cysteine 95 and cysteine 155 form a disulfide bridge. The Proton donor/acceptor role is filled by glutamate 98. An interaction with peptide substrate region spans residues 100–104 (RIIPR). Positions 182, 190, and 194 each coordinate 3'-phosphoadenylyl sulfate. A disulfide bridge links cysteine 224 with cysteine 232. 3'-phosphoadenylyl sulfate is bound by residues tyrosine 237, 284–293 (STDQVIKPVN), and lysine 299. 2 N-linked (GlcNAc...) asparagine glycosylation sites follow: asparagine 342 and asparagine 367.

This sequence belongs to the protein sulfotransferase family. As to quaternary structure, homodimer. Can also form heterodimers with TPST1. N-glycosylated. As to expression, widely expressed.

The protein localises to the golgi apparatus membrane. The catalysed reaction is L-tyrosyl-[protein] + 3'-phosphoadenylyl sulfate = O-sulfo-L-tyrosine-[protein] + adenosine 3',5'-bisphosphate + H(+). Its function is as follows. Catalyzes the O-sulfation of tyrosine residues within acidic motifs of polypeptides, using 3'-phosphoadenylyl sulfate (PAPS) as cosubstrate. This chain is Protein-tyrosine sulfotransferase 2 (Tpst2), found in Mus musculus (Mouse).